A 125-amino-acid polypeptide reads, in one-letter code: Putative RNA polymerase sigma-G factor (125 aa).

Belongs to the sigma-70 factor family.

Its function is as follows. Sigma factors are initiation factors that promote the attachment of RNA polymerase to specific initiation sites and are then released. The chain is Putative RNA polymerase sigma-G factor from Bacillus thuringiensis subsp. kurstaki.